The sequence spans 357 residues: Holliday junction branch migration complex subunit RuvB (357 aa).

Polar residues predominate over residues 1–10; that stretch reads MAIQSDSLSS. Residues 1–30 are disordered; the sequence is MAIQSDSLSSRPDAPRLVAPAPASPNEESI. The tract at residues 5 to 195 is large ATPase domain (RuvB-L); that stretch reads SDSLSSRPDA…FGIVSRLEFY (191 aa). ATP contacts are provided by residues leucine 34, arginine 35, glycine 76, lysine 79, threonine 80, threonine 81, 142–144, arginine 185, tyrosine 195, and arginine 232; that span reads EDF. Position 80 (threonine 80) interacts with Mg(2+). The small ATPAse domain (RuvB-S) stretch occupies residues 196-266; it reads NTDDLAHIVT…AANQALAMLE (71 aa). Residues 269–357 form a head domain (RuvB-H) region; that stretch reads PQGLDLMDRK…QPSSGDLFGA (89 aa). DNA-binding residues include arginine 305, arginine 324, and arginine 329.

This sequence belongs to the RuvB family. Homohexamer. Forms an RuvA(8)-RuvB(12)-Holliday junction (HJ) complex. HJ DNA is sandwiched between 2 RuvA tetramers; dsDNA enters through RuvA and exits via RuvB. An RuvB hexamer assembles on each DNA strand where it exits the tetramer. Each RuvB hexamer is contacted by two RuvA subunits (via domain III) on 2 adjacent RuvB subunits; this complex drives branch migration. In the full resolvosome a probable DNA-RuvA(4)-RuvB(12)-RuvC(2) complex forms which resolves the HJ.

It localises to the cytoplasm. The catalysed reaction is ATP + H2O = ADP + phosphate + H(+). In terms of biological role, the RuvA-RuvB-RuvC complex processes Holliday junction (HJ) DNA during genetic recombination and DNA repair, while the RuvA-RuvB complex plays an important role in the rescue of blocked DNA replication forks via replication fork reversal (RFR). RuvA specifically binds to HJ cruciform DNA, conferring on it an open structure. The RuvB hexamer acts as an ATP-dependent pump, pulling dsDNA into and through the RuvAB complex. RuvB forms 2 homohexamers on either side of HJ DNA bound by 1 or 2 RuvA tetramers; 4 subunits per hexamer contact DNA at a time. Coordinated motions by a converter formed by DNA-disengaged RuvB subunits stimulates ATP hydrolysis and nucleotide exchange. Immobilization of the converter enables RuvB to convert the ATP-contained energy into a lever motion, pulling 2 nucleotides of DNA out of the RuvA tetramer per ATP hydrolyzed, thus driving DNA branch migration. The RuvB motors rotate together with the DNA substrate, which together with the progressing nucleotide cycle form the mechanistic basis for DNA recombination by continuous HJ branch migration. Branch migration allows RuvC to scan DNA until it finds its consensus sequence, where it cleaves and resolves cruciform DNA. The polypeptide is Holliday junction branch migration complex subunit RuvB (Bordetella avium (strain 197N)).